A 430-amino-acid chain; its full sequence is Cyclin-A2 (430 aa).

Met1 carries the post-translational modification N-acetylmethionine. Disordered regions lie at residues 1–80 (MLGS…PIND) and 106–129 (EEIQ…FNSA). At Ser5 the chain carries Phosphoserine. Over residues 107 to 120 (EIQKRPTESKKSES) the composition is skewed to basic and acidic residues.

The protein belongs to the cyclin family. Cyclin AB subfamily. As to quaternary structure, interacts with the CDK1 and CDK2 protein kinases to form serine/threonine kinase holoenzyme complexes. Interacts with CDK1 (hyperphosphorylated form in G1 and underphosphorylated forms in S and G2). Interacts with CDK2; the interaction increases from G1 to G2. Interacts (associated with CDK2 but not with CDK1) with SCAPER; regulates the activity of CCNA2/CDK2 by transiently maintaining CCNA2 in the cytoplasm. Forms a ternary complex with CDK2 and CDKN1B; CDKN1B inhibits the kinase activity of CDK2 through conformational rearrangements. Interacts with INCA1. Post-translationally, polyubiquitinated via 'Lys-11'-linked ubiquitin by the anaphase-promoting complex (APC/C), leading to its degradation by the proteasome. Deubiquitinated and stabilized by USP37 enables entry into S phase. Ubiquitinated during the G1 phase by the SCF(FBXO31) complex, leading to its proteasomal degradation.

The protein localises to the nucleus. The protein resides in the cytoplasm. Its function is as follows. Cyclin which controls both the G1/S and the G2/M transition phases of the cell cycle. Functions through the formation of specific serine/threonine kinase holoenzyme complexes with the cyclin-dependent protein kinases CDK1 and CDK2. The cyclin subunit confers the substrate specificity of these complexes and differentially interacts with and activates CDK1 and CDK2 throughout the cell cycle. The sequence is that of Cyclin-A2 from Bos taurus (Bovine).